The following is a 164-amino-acid chain: Lipoprotein signal peptidase (164 aa).

3 helical membrane passes run 12–32 (WLWL…LILQ), 70–90 (WFFA…MYRS), and 102–122 (ALII…GFVV). Catalysis depends on residues Asp-123 and Asp-141. Residues 137-157 (FNLADTAICVGAALIVLEGFL) traverse the membrane as a helical segment.

The protein belongs to the peptidase A8 family.

The protein localises to the cell inner membrane. The enzyme catalyses Release of signal peptides from bacterial membrane prolipoproteins. Hydrolyzes -Xaa-Yaa-Zaa-|-(S,diacylglyceryl)Cys-, in which Xaa is hydrophobic (preferably Leu), and Yaa (Ala or Ser) and Zaa (Gly or Ala) have small, neutral side chains.. Its pathway is protein modification; lipoprotein biosynthesis (signal peptide cleavage). This protein specifically catalyzes the removal of signal peptides from prolipoproteins. This Shigella flexneri protein is Lipoprotein signal peptidase.